We begin with the raw amino-acid sequence, 81 residues long: MESLGATVKEPGSTRKNKTGSWRTFKPFLDKDKCIDCDNCILFCPEGCIDKEHEIDYDYCKGCGICAEECPVKAIKMEREK.

Residues 1–20 (MESLGATVKEPGSTRKNKTG) form a disordered region. 2 consecutive 4Fe-4S ferredoxin-type domains span residues 25–54 (FKPF…KEHE) and 51–80 (KEHE…MERE). [4Fe-4S] cluster contacts are provided by Cys-34, Cys-37, Cys-40, Cys-44, Cys-60, Cys-63, Cys-66, and Cys-70.

As to quaternary structure, heterotetramer of one alpha, one beta, one delta and one gamma chain. Requires [4Fe-4S] cluster as cofactor.

This is Pyruvate synthase subunit PorD (porD) from Methanothermobacter marburgensis (strain ATCC BAA-927 / DSM 2133 / JCM 14651 / NBRC 100331 / OCM 82 / Marburg) (Methanobacterium thermoautotrophicum).